The following is a 411-amino-acid chain: Phospholipase A1-II 6 (411 aa).

The Acyl-ester intermediate role is filled by serine 226. Catalysis depends on charge relay system residues serine 226, aspartate 296, and histidine 334.

The protein belongs to the AB hydrolase superfamily. Lipase family.

The protein localises to the cytoplasm. Its function is as follows. Acylhydrolase that catalyzes the hydrolysis of phospholipids at the sn-1 position. This chain is Phospholipase A1-II 6, found in Oryza sativa subsp. japonica (Rice).